The sequence spans 481 residues: MDDDLALQRAVALRSGLDDYELDDADLDLLEVDGEDADAIAFLPALPVLAIVGRPNVGKSALVNRILGRREAVVEDTPGVTRDRVSYRAEWNGRRFTVVDTGGWEPDARGIDASVAAQAEVAIDLADAVMFVVDAMVGATSTDEHVVRLLRKSDKPVFLAANKVDDARQEPSATELWSLGLGEPHPVSALHGRGVADLLDKILKALPDVSAVAKQEVGGPRRVAILGRPNVGKSSLLNKAAGEERVVVNELAGTTRDPVDEQVELGGRVWRFVDTAGIRRRVHLQQGADFYASLRTSTALEKAEVAVVVLDVSQPISEQDVRIIDLVLESGRALVLAFNKWDLLDDERRRYLEREIEQDLAHVSWAPRVNISARTGRHLEKLVPALERALESWETRIPTGKFNAFLAELTSAHPHPVRGGKQPRILFGTQSTSRPPTFVVFTTGFLDPGYRRYVIRRLREVYGFEGTPIVLNMRVREKRKH.

EngA-type G domains are found at residues 47-210 (PVLA…PDVS) and 221-394 (RRVA…ESWE). GTP-binding positions include 53–60 (GRPNVGKS), 100–104 (DTGGW), 162–165 (NKVD), 227–234 (GRPNVGKS), 274–278 (DTAGI), and 339–342 (NKWD). One can recognise a KH-like domain in the interval 395–477 (TRIPTGKFNA…PIVLNMRVRE (83 aa)).

Belongs to the TRAFAC class TrmE-Era-EngA-EngB-Septin-like GTPase superfamily. EngA (Der) GTPase family. In terms of assembly, associates with the 50S ribosomal subunit.

Its function is as follows. GTPase that plays an essential role in the late steps of ribosome biogenesis. This Leifsonia xyli subsp. xyli (strain CTCB07) protein is GTPase Der.